The primary structure comprises 594 residues: Developmental and secondary metabolism regulator veA (594 aa).

Residues 24–220 (GRRLFYRIDV…AEQGTRVRIR (197 aa)) form the Velvet domain. The short motif at 38–43 (EKCRAC) is the Nuclear localization signal element. Disordered regions lie at residues 40-59 (CRAC…VDPP) and 210-558 (MAEQ…DVEE). The segment covering 217–229 (VRIRRDVRMRRRD) has biased composition (basic residues). The segment covering 296–307 (APPPPNPPPPGF) has biased composition (pro residues). Residues 327–351 (SHSQYQQPTSSSSSSEQVSSVPQSP) show a composition bias toward low complexity. Polar residues predominate over residues 352-362 (AYSSHAAQQHY). Residues 374 to 383 (PERRLSDHRS) are compositionally biased toward basic and acidic residues. A compositionally biased stretch (low complexity) spans 384–403 (SQPNNHPQQSPHQHSYSHRS). Basic and acidic residues predominate over residues 405–416 (PQRERFMPDSRR). The tract at residues 457-506 (VADTQATPHLPPIRWPRPNMNLPSPPSEHQEALQPLQPAPLHYESQTHQQ) is PEST. The span at 523 to 538 (YSYGYSYSHNHSHGYG) shows a compositional bias: low complexity.

It belongs to the velvet family. VeA subfamily. In terms of assembly, component of the heterotrimeric velvet complex composed of LAEA, VEA and VELB; VEA acting as a bridging protein between LAEA and VELB.

It is found in the nucleus. The protein localises to the cytoplasm. Component of the velvet transcription factor complex that controls sexual/asexual developmental ratio in response to light, promoting sexual development in the darkness while stimulating asexual sporulation under illumination. The velvet complex acts as a global regulator for secondary metabolite gene expression. Regulates of the response to reactive oxygen species (ROS) stress. This Pyricularia oryzae (strain 70-15 / ATCC MYA-4617 / FGSC 8958) (Rice blast fungus) protein is Developmental and secondary metabolism regulator veA.